The following is a 359-amino-acid chain: 4-hydroxy-tetrahydrodipicolinate synthase, chloroplastic (359 aa).

The N-terminal 33 residues, 1 to 33, are a transit peptide targeting the chloroplast; it reads MSSSIIGRCHFVADSIEAAGTKRRTTRWRSPRA. Residue Thr102 coordinates pyruvate. The Proton donor/acceptor role is filled by Tyr188. Lys216 (schiff-base intermediate with substrate) is an active-site residue. Ile255 provides a ligand contact to pyruvate.

Belongs to the DapA family.

It is found in the plastid. The protein localises to the chloroplast. The catalysed reaction is L-aspartate 4-semialdehyde + pyruvate = (2S,4S)-4-hydroxy-2,3,4,5-tetrahydrodipicolinate + H2O + H(+). The protein operates within amino-acid biosynthesis; L-lysine biosynthesis via DAP pathway; (S)-tetrahydrodipicolinate from L-aspartate: step 3/4. Its function is as follows. Catalyzes the condensation of (S)-aspartate-beta-semialdehyde [(S)-ASA] and pyruvate to 4-hydroxy-tetrahydrodipicolinate (HTPA). This Nicotiana tabacum (Common tobacco) protein is 4-hydroxy-tetrahydrodipicolinate synthase, chloroplastic (DHPS1).